The following is a 494-amino-acid chain: Alpha-amylase-related protein (494 aa).

Positions 1–20 (MIKFALALTLCLAGASLSLA) are cleaved as a signal peptide. At Gln-21 the chain carries Pyrrolidone carboxylic acid. Cys-48 and Cys-104 are disulfide-bonded. The Ca(2+) site is built by Asn-118, Gln-169, and Asp-178. Cys-157 and Cys-171 are oxidised to a cystine. Residue Arg-206 coordinates chloride. The active-site Nucleophile is Asp-208. His-212 provides a ligand contact to Ca(2+). Glu-245 acts as the Proton donor in catalysis. 2 residues coordinate chloride: Asn-308 and Arg-343. 3 disulfide bridges follow: Cys-376–Cys-382, Cys-418–Cys-441, and Cys-448–Cys-460.

It belongs to the glycosyl hydrolase 13 family. In terms of assembly, monomer. Requires Ca(2+) as cofactor. It depends on chloride as a cofactor.

Its subcellular location is the secreted. The catalysed reaction is Endohydrolysis of (1-&gt;4)-alpha-D-glucosidic linkages in polysaccharides containing three or more (1-&gt;4)-alpha-linked D-glucose units.. The protein is Alpha-amylase-related protein (Amyrel) of Drosophila bocqueti (Fruit fly).